The chain runs to 424 residues: Transcription regulator spe-44 (424 aa).

One can recognise an SAND domain in the interval Pro-65–Asp-150. Disordered regions lie at residues Ala-178–Gln-228 and Glu-371–Phe-394. A compositionally biased stretch (basic and acidic residues) spans Tyr-192–Lys-210. Residues Pro-378–Leu-388 show a composition bias toward polar residues.

It localises to the chromosome. The protein resides in the nucleus. Functionally, transcription factor which controls spermatogenesis and sperm cell fate by regulation of sperm gene expression. This is Transcription regulator spe-44 from Caenorhabditis elegans.